We begin with the raw amino-acid sequence, 439 residues long: Xylose isomerase (439 aa).

Residues histidine 103 and aspartate 106 contribute to the active site. 7 residues coordinate Mg(2+): glutamate 234, glutamate 270, histidine 273, aspartate 298, aspartate 309, aspartate 311, and aspartate 341.

The protein belongs to the xylose isomerase family. As to quaternary structure, homotetramer. The cofactor is Mg(2+).

The protein localises to the cytoplasm. The catalysed reaction is alpha-D-xylose = alpha-D-xylulofuranose. This Bacteroides fragilis (strain ATCC 25285 / DSM 2151 / CCUG 4856 / JCM 11019 / LMG 10263 / NCTC 9343 / Onslow / VPI 2553 / EN-2) protein is Xylose isomerase.